The following is a 92-amino-acid chain: Signal recognition particle 19 kDa protein (92 aa).

The protein belongs to the SRP19 family. In terms of assembly, part of the signal recognition particle protein translocation system, which is composed of SRP and FtsY. Archaeal SRP consists of a 7S RNA molecule of 300 nucleotides and two protein subunits: SRP54 and SRP19.

The protein resides in the cytoplasm. Functionally, involved in targeting and insertion of nascent membrane proteins into the cytoplasmic membrane. Binds directly to 7S RNA and mediates binding of the 54 kDa subunit of the SRP. This Haloferax volcanii (strain ATCC 29605 / DSM 3757 / JCM 8879 / NBRC 14742 / NCIMB 2012 / VKM B-1768 / DS2) (Halobacterium volcanii) protein is Signal recognition particle 19 kDa protein.